The following is a 248-amino-acid chain: ATP synthase subunit a, chloroplastic (248 aa).

A run of 5 helical transmembrane segments spans residues 35 to 55 (GQVF…SFLG), 94 to 114 (VPYI…GALI), 133 to 153 (INTT…AGLS), 202 to 222 (VFTL…GLFA), and 224 to 244 (SIQA…AMEG).

It belongs to the ATPase A chain family. As to quaternary structure, F-type ATPases have 2 components, CF(1) - the catalytic core - and CF(0) - the membrane proton channel. CF(1) has five subunits: alpha(3), beta(3), gamma(1), delta(1), epsilon(1). CF(0) has four main subunits: a, b, b' and c.

Its subcellular location is the plastid. The protein resides in the chloroplast thylakoid membrane. Its function is as follows. Key component of the proton channel; it plays a direct role in the translocation of protons across the membrane. The protein is ATP synthase subunit a, chloroplastic of Porphyra purpurea (Red seaweed).